A 119-amino-acid polypeptide reads, in one-letter code: Large ribosomal subunit protein bL20 (119 aa).

This sequence belongs to the bacterial ribosomal protein bL20 family.

In terms of biological role, binds directly to 23S ribosomal RNA and is necessary for the in vitro assembly process of the 50S ribosomal subunit. It is not involved in the protein synthesizing functions of that subunit. In Azorhizobium caulinodans (strain ATCC 43989 / DSM 5975 / JCM 20966 / LMG 6465 / NBRC 14845 / NCIMB 13405 / ORS 571), this protein is Large ribosomal subunit protein bL20.